The primary structure comprises 121 residues: Small ribosomal subunit protein bS6 (121 aa).

This sequence belongs to the bacterial ribosomal protein bS6 family.

Its function is as follows. Binds together with bS18 to 16S ribosomal RNA. The sequence is that of Small ribosomal subunit protein bS6 from Rickettsia peacockii (strain Rustic).